The sequence spans 357 residues: Dual-specificity RNA methyltransferase RlmN (357 aa).

The active-site Proton acceptor is Glu-89. One can recognise a Radical SAM core domain in the interval 109-340; it reads EGEKYTVCVS…CTIRESKALD (232 aa). A disulfide bond links Cys-116 and Cys-345. The [4Fe-4S] cluster site is built by Cys-123, Cys-127, and Cys-130. S-adenosyl-L-methionine is bound by residues 173-174, Ser-203, 226-228, and Asn-302; these read GE and SLH. Cys-345 (S-methylcysteine intermediate) is an active-site residue.

Belongs to the radical SAM superfamily. RlmN family. [4Fe-4S] cluster is required as a cofactor.

The protein localises to the cytoplasm. The catalysed reaction is adenosine(2503) in 23S rRNA + 2 reduced [2Fe-2S]-[ferredoxin] + 2 S-adenosyl-L-methionine = 2-methyladenosine(2503) in 23S rRNA + 5'-deoxyadenosine + L-methionine + 2 oxidized [2Fe-2S]-[ferredoxin] + S-adenosyl-L-homocysteine. It carries out the reaction adenosine(37) in tRNA + 2 reduced [2Fe-2S]-[ferredoxin] + 2 S-adenosyl-L-methionine = 2-methyladenosine(37) in tRNA + 5'-deoxyadenosine + L-methionine + 2 oxidized [2Fe-2S]-[ferredoxin] + S-adenosyl-L-homocysteine. In terms of biological role, specifically methylates position 2 of adenine 2503 in 23S rRNA and position 2 of adenine 37 in tRNAs. m2A2503 modification seems to play a crucial role in the proofreading step occurring at the peptidyl transferase center and thus would serve to optimize ribosomal fidelity. This chain is Dual-specificity RNA methyltransferase RlmN, found in Helicobacter pylori (strain G27).